Here is a 208-residue protein sequence, read N- to C-terminus: MKVVEVKHPLVRHKIGLMREGDISTKRFRELAAEVGSLLTYEATADFETETVTIEGWNGPVEVDQIKGKKVTVVPILRAGLGMMDGVLEHIPSARISVVGIYRDEETLEPVPYFEKLASDMNERIALVVDPMLATGGSMIATVDLLKKRGCTSIKALVLVAAPEGIKALEAAHPDIELYTAAIDRCLNEKGYILPGLGDAGDKIFGTK.

5-phospho-alpha-D-ribose 1-diphosphate is bound by residues arginine 78, arginine 103, and 130–138 (DPMLATGGS). Uracil-binding positions include isoleucine 193 and 198 to 200 (GDA). Aspartate 199 is a 5-phospho-alpha-D-ribose 1-diphosphate binding site.

The protein belongs to the UPRTase family. The cofactor is Mg(2+).

It catalyses the reaction UMP + diphosphate = 5-phospho-alpha-D-ribose 1-diphosphate + uracil. It participates in pyrimidine metabolism; UMP biosynthesis via salvage pathway; UMP from uracil: step 1/1. With respect to regulation, allosterically activated by GTP. In terms of biological role, catalyzes the conversion of uracil and 5-phospho-alpha-D-ribose 1-diphosphate (PRPP) to UMP and diphosphate. The protein is Uracil phosphoribosyltransferase of Shewanella putrefaciens (strain CN-32 / ATCC BAA-453).